A 258-amino-acid polypeptide reads, in one-letter code: Neurotrophin-3 (258 aa).

Residues 1-18 (MSILFYVIFLAYLRGIQG) form the signal peptide. Positions 19-139 (NNMDQRSLPE…TNRTSPRRKR (121 aa)) are excised as a propeptide. The disordered stretch occupies residues 60–85 (QSTLPKAEAPREPEQGEATRSEFQPM). A compositionally biased stretch (basic and acidic residues) spans 67–79 (EAPREPEQGEATR). N-linked (GlcNAc...) asparagine glycosylation occurs at N131. Intrachain disulfides connect C153/C218, C196/C247, and C206/C249.

The protein belongs to the NGF-beta family. Brain and peripheral tissues.

It is found in the secreted. In terms of biological role, seems to promote the survival of visceral and proprioceptive sensory neurons. The polypeptide is Neurotrophin-3 (Ntf3) (Rattus norvegicus (Rat)).